Here is a 621-residue protein sequence, read N- to C-terminus: Very-long-chain aldehyde decarbonylase GL1-5 (621 aa).

5 helical membrane-spanning segments follow: residues 99–119, 126–146, 186–206, 224–244, and 332–352; these read IILSGILLYLGALYVPGGQHL, GAGLIALLHAGPVEFLYYWFH, LLFSIPLIACALTGTASIIAF, FELVPSWLFTWFPPLKYLMYT, and MWPLSWLSMVLTWTYGSSFTV. In terms of domain architecture, Fatty acid hydroxylase spans 138–272; sequence VEFLYYWFHR…MPFYDYIYNT (135 aa).

Belongs to the sterol desaturase family. As to quaternary structure, homodimer.

The protein localises to the endoplasmic reticulum membrane. It carries out the reaction a long-chain fatty aldehyde + 2 NADPH + O2 + H(+) = a long-chain alkane + formate + 2 NADP(+) + H2O. In terms of biological role, aldehyde decarbonylase involved in the conversion of aldehydes to alkanes. Core component of a very-long-chain alkane synthesis complex. This is Very-long-chain aldehyde decarbonylase GL1-5 from Oryza sativa subsp. indica (Rice).